A 152-amino-acid polypeptide reads, in one-letter code: Nucleoside diphosphate kinase (152 aa).

ATP is bound by residues Lys11, Phe59, Arg87, Thr93, Arg104, and Asn114. His117 (pros-phosphohistidine intermediate) is an active-site residue.

It belongs to the NDK family. Homotetramer. The cofactor is Mg(2+).

Its subcellular location is the cytoplasm. The enzyme catalyses dZDP + ATP = dZTP + ADP. It carries out the reaction a 2'-deoxyribonucleoside 5'-diphosphate + ATP = a 2'-deoxyribonucleoside 5'-triphosphate + ADP. The catalysed reaction is a ribonucleoside 5'-diphosphate + ATP = a ribonucleoside 5'-triphosphate + ADP. It participates in purine metabolism. Its function is as follows. Major role in the synthesis of nucleoside triphosphates other than ATP. The ATP gamma phosphate is transferred to the NDP beta phosphate via a ping-pong mechanism, using a phosphorylated active-site intermediate. Functionally, (Microbial infection) Catalyzes the phosphorylation of dZDP to dZTP, when the bacterium is infected by a phage that produces the substrate for the synthesis of dZTP (2- amino-2'-deoxyadenosine 5'-triphosphate), which is then used by the phage as a DNA polymerase substrate. This is Nucleoside diphosphate kinase from Synechococcus sp. (strain WH7803).